The following is a 1953-amino-acid chain: tRNA (32-2'-O)-methyltransferase regulator THADA (1953 aa).

Residues 886–918 (ERNTLMVIKCLMENLEEEVSQAENSLLQAAAAF) adopt a coiled-coil conformation. Phosphoserine is present on residues Ser-1015, Ser-1024, and Ser-1161.

The protein belongs to the THADA family. In terms of tissue distribution, expressed in pancreas, adrenal medulla, thyroid, adrenal cortex, testis, thymus, small intestine and stomach.

Functionally, together with methyltransferase FTSJ1, methylates the 2'-O-ribose of nucleotides at position 32 of the anticodon loop of substrate tRNAs. This is tRNA (32-2'-O)-methyltransferase regulator THADA (THADA) from Homo sapiens (Human).